Here is a 469-residue protein sequence, read N- to C-terminus: UDP-glycosyltransferase 43 (469 aa).

UDP-alpha-D-glucose contacts are provided by residues Ser280, 345–346, 363–371, and 385–388; these read WV, HCGWNSILE, and YSEQ.

It belongs to the UDP-glycosyltransferase family.

Inhibited by Cu(2+) or Zn(2+). Its function is as follows. Glycosyltransferase that catalyzes the C-glucosylation of daidzein to puerarin. Shows activity with the isoflavones daidzein and genistein, but has no activity towards flavonoids such as 2-hydroxynaringenin. Can use UDP-glucose, but not UDP-galactose or UDP-glucuronic acid as sugar donor. Does not require bivalent cations for activity. In Pueraria montana var. lobata (Kudzu vine), this protein is UDP-glycosyltransferase 43.